The sequence spans 900 residues: Iodate reductase subunit IdrA (900 aa).

Positions 1–21 are disordered; it reads MSENIKQGGAGTFMQAPQDSV. [3Fe-4S] cluster is bound by residues Cys35, Cys38, and Cys42.

It belongs to the prokaryotic molybdopterin-containing oxidoreductase family. The iodate reductase (Idr) complex is composed of a molybdopterin-dependent iodate reductase (IdrA and IdrB subunits) and two associated peroxidases (IdrP1 and IdrP2). It depends on [3Fe-4S] cluster as a cofactor. The cofactor is Mo-bis(molybdopterin guanine dinucleotide).

It localises to the periplasm. Its function is as follows. Involved in iodate respiration. May accept electrons from cytochrome c551, and catalyze the reduction of iodate (IO(3)(-)) to produce the chemically unstable intermediate hypoiodous acid (HIO). This intermediate then undergoes abiotic disproportionation to yield two molecules of iodide (I(-)) and one molecule of iodate. The resultant iodate subsequently cycles back into the reductive pathway. The initial reduction of iodate may inadvertently produce low levels of incidental toxic H(2)O(2), which is detoxified by IdrP1 and IdrP2. The chain is Iodate reductase subunit IdrA from Denitromonas iodatirespirans.